The following is a 193-amino-acid chain: Der GTPase-activating protein YihI (193 aa).

Basic residues predominate over residues 1–12 (MSAKQPNRKPTG). Disordered stretches follow at residues 1 to 91 (MSAK…KLVM) and 143 to 193 (IIDN…PKKK). The segment covering 13-26 (KRKESDASALDGRE) has biased composition (basic and acidic residues). Over residues 27–36 (RKRAAKRKGL) the composition is skewed to basic residues. Residues 40–54 (SRQQAEQSSKNNNGK) show a composition bias toward polar residues. A compositionally biased stretch (acidic residues) spans 145–160 (DNDDDEEDDGSFDDAS). Residues 184-193 (PEPKPEPKKK) show a composition bias toward basic and acidic residues.

This sequence belongs to the YihI family. Interacts with Der.

In terms of biological role, a GTPase-activating protein (GAP) that modifies Der/EngA GTPase function. May play a role in ribosome biogenesis. This Aeromonas salmonicida (strain A449) protein is Der GTPase-activating protein YihI.